The chain runs to 577 residues: Arginine--tRNA ligase (577 aa).

A 'HIGH' region motif is present at residues 122 to 132 (PNVAKEMHVGH).

It belongs to the class-I aminoacyl-tRNA synthetase family. Monomer.

It is found in the cytoplasm. The catalysed reaction is tRNA(Arg) + L-arginine + ATP = L-arginyl-tRNA(Arg) + AMP + diphosphate. This chain is Arginine--tRNA ligase, found in Histophilus somni (strain 129Pt) (Haemophilus somnus).